The following is a 191-amino-acid chain: Putative zinc metalloprotease MJ0611 (191 aa).

A helical transmembrane segment spans residues Ala20 to Ile40. His49 is a Zn(2+) binding site. Glu50 is an active-site residue. His53 is a binding site for Zn(2+). The next 4 helical transmembrane spans lie at Leu73–Val93, Leu110–Phe130, Gly133–Phe153, and Pro171–Trp191.

The protein belongs to the peptidase M50B family. The cofactor is Zn(2+).

It is found in the cell membrane. This is Putative zinc metalloprotease MJ0611 from Methanocaldococcus jannaschii (strain ATCC 43067 / DSM 2661 / JAL-1 / JCM 10045 / NBRC 100440) (Methanococcus jannaschii).